The primary structure comprises 729 residues: Phosphoribosylformylglycinamidine synthase subunit PurL (729 aa).

Histidine 54 is an active-site residue. ATP-binding residues include tyrosine 57 and lysine 96. Glutamate 98 lines the Mg(2+) pocket. Substrate-binding positions include serine 99–histidine 102 and arginine 121. Histidine 100 (proton acceptor) is an active-site residue. Residue aspartate 122 coordinates Mg(2+). Glutamine 245 contacts substrate. Mg(2+) is bound at residue aspartate 273. Glutamate 317–glutamine 319 contacts substrate. Residues aspartate 495 and glycine 532 each contribute to the ATP site. Asparagine 533 contributes to the Mg(2+) binding site. Serine 535 is a substrate binding site.

It belongs to the FGAMS family. In terms of assembly, monomer. Part of the FGAM synthase complex composed of 1 PurL, 1 PurQ and 2 PurS subunits.

The protein resides in the cytoplasm. The catalysed reaction is N(2)-formyl-N(1)-(5-phospho-beta-D-ribosyl)glycinamide + L-glutamine + ATP + H2O = 2-formamido-N(1)-(5-O-phospho-beta-D-ribosyl)acetamidine + L-glutamate + ADP + phosphate + H(+). Its pathway is purine metabolism; IMP biosynthesis via de novo pathway; 5-amino-1-(5-phospho-D-ribosyl)imidazole from N(2)-formyl-N(1)-(5-phospho-D-ribosyl)glycinamide: step 1/2. In terms of biological role, part of the phosphoribosylformylglycinamidine synthase complex involved in the purines biosynthetic pathway. Catalyzes the ATP-dependent conversion of formylglycinamide ribonucleotide (FGAR) and glutamine to yield formylglycinamidine ribonucleotide (FGAM) and glutamate. The FGAM synthase complex is composed of three subunits. PurQ produces an ammonia molecule by converting glutamine to glutamate. PurL transfers the ammonia molecule to FGAR to form FGAM in an ATP-dependent manner. PurS interacts with PurQ and PurL and is thought to assist in the transfer of the ammonia molecule from PurQ to PurL. The polypeptide is Phosphoribosylformylglycinamidine synthase subunit PurL (Staphylococcus epidermidis (strain ATCC 12228 / FDA PCI 1200)).